Here is a 161-residue protein sequence, read N- to C-terminus: Crossover junction endodeoxyribonuclease RuvC (161 aa).

Catalysis depends on residues aspartate 8, glutamate 67, and aspartate 139. Residues aspartate 8, glutamate 67, and aspartate 139 each coordinate Mg(2+).

This sequence belongs to the RuvC family. As to quaternary structure, homodimer which binds Holliday junction (HJ) DNA. The HJ becomes 2-fold symmetrical on binding to RuvC with unstacked arms; it has a different conformation from HJ DNA in complex with RuvA. In the full resolvosome a probable DNA-RuvA(4)-RuvB(12)-RuvC(2) complex forms which resolves the HJ. Mg(2+) is required as a cofactor.

It is found in the cytoplasm. It carries out the reaction Endonucleolytic cleavage at a junction such as a reciprocal single-stranded crossover between two homologous DNA duplexes (Holliday junction).. In terms of biological role, the RuvA-RuvB-RuvC complex processes Holliday junction (HJ) DNA during genetic recombination and DNA repair. Endonuclease that resolves HJ intermediates. Cleaves cruciform DNA by making single-stranded nicks across the HJ at symmetrical positions within the homologous arms, yielding a 5'-phosphate and a 3'-hydroxyl group; requires a central core of homology in the junction. The consensus cleavage sequence is 5'-(A/T)TT(C/G)-3'. Cleavage occurs on the 3'-side of the TT dinucleotide at the point of strand exchange. HJ branch migration catalyzed by RuvA-RuvB allows RuvC to scan DNA until it finds its consensus sequence, where it cleaves and resolves the cruciform DNA. This chain is Crossover junction endodeoxyribonuclease RuvC, found in Wigglesworthia glossinidia brevipalpis.